Here is a 263-residue protein sequence, read N- to C-terminus: Tryptophan synthase alpha chain (263 aa).

Residues glutamate 49 and aspartate 60 each act as proton acceptor in the active site.

It belongs to the TrpA family. Tetramer of two alpha and two beta chains.

It catalyses the reaction (1S,2R)-1-C-(indol-3-yl)glycerol 3-phosphate + L-serine = D-glyceraldehyde 3-phosphate + L-tryptophan + H2O. The protein operates within amino-acid biosynthesis; L-tryptophan biosynthesis; L-tryptophan from chorismate: step 5/5. In terms of biological role, the alpha subunit is responsible for the aldol cleavage of indoleglycerol phosphate to indole and glyceraldehyde 3-phosphate. The polypeptide is Tryptophan synthase alpha chain (Cereibacter sphaeroides (strain ATCC 17029 / ATH 2.4.9) (Rhodobacter sphaeroides)).